Here is a 473-residue protein sequence, read N- to C-terminus: Putative sulfoquinovose importer (473 aa).

11 consecutive transmembrane segments (helical) span residues 18–38 (AYGVGDFGSNLMLCIGTLYLL), 45–65 (LGMPAYYGGIIFLVAKFFTAF), 88–108 (PFILYASFPVALVATAQFFAT), 110–130 (FTLPVKTAFATVLFMLFGLFY), 160–180 (GGATIGLLLCTVGFMPIQALF), 187–207 (GYLIAAVIFSVCGLFSMWWCF), 239–259 (LLVLCVANLCTLAAFNIKLAI), 276–296 (WMGFFSMGCILIGVLLVPAAV), 317–337 (ILNFIWGGTSFLFVIFSCIAF), 380–400 (ISAALAGFLPGIMLTQIGYIP), and 415–435 (LIFLWPCGLAIIAALTMGFFY).

It belongs to the sodium:galactoside symporter (TC 2.A.2) family.

The protein resides in the cell inner membrane. In terms of biological role, could be involved in sulfoquinovose import. This is Putative sulfoquinovose importer (yihO) from Salmonella typhimurium (strain LT2 / SGSC1412 / ATCC 700720).